Consider the following 104-residue polypeptide: Large ribosomal subunit protein uL24 (104 aa).

It belongs to the universal ribosomal protein uL24 family. In terms of assembly, part of the 50S ribosomal subunit.

One of two assembly initiator proteins, it binds directly to the 5'-end of the 23S rRNA, where it nucleates assembly of the 50S subunit. In terms of biological role, one of the proteins that surrounds the polypeptide exit tunnel on the outside of the subunit. The polypeptide is Large ribosomal subunit protein uL24 (Baumannia cicadellinicola subsp. Homalodisca coagulata).